A 487-amino-acid polypeptide reads, in one-letter code: Glutamyl-tRNA(Gln) amidotransferase subunit A (487 aa).

Active-site charge relay system residues include Lys-74 and Ser-149. The active-site Acyl-ester intermediate is Ser-173.

The protein belongs to the amidase family. GatA subfamily. Heterotrimer of A, B and C subunits.

It catalyses the reaction L-glutamyl-tRNA(Gln) + L-glutamine + ATP + H2O = L-glutaminyl-tRNA(Gln) + L-glutamate + ADP + phosphate + H(+). Its function is as follows. Allows the formation of correctly charged Gln-tRNA(Gln) through the transamidation of misacylated Glu-tRNA(Gln) in organisms which lack glutaminyl-tRNA synthetase. The reaction takes place in the presence of glutamine and ATP through an activated gamma-phospho-Glu-tRNA(Gln). In Synechococcus sp. (strain WH7803), this protein is Glutamyl-tRNA(Gln) amidotransferase subunit A.